The chain runs to 96 residues: Probable Fe(2+)-trafficking protein (96 aa).

The disordered stretch occupies residues 21-40 (LPKMPHPPFPNKKGQELQET).

This sequence belongs to the Fe(2+)-trafficking protein family.

In terms of biological role, could be a mediator in iron transactions between iron acquisition and iron-requiring processes, such as synthesis and/or repair of Fe-S clusters in biosynthetic enzymes. The sequence is that of Probable Fe(2+)-trafficking protein from Psychrobacter arcticus (strain DSM 17307 / VKM B-2377 / 273-4).